The chain runs to 1681 residues: Meiosis regulator and mRNA stability factor 1 (1681 aa).

The region spanning 340-477 is the NYN domain; it reads IGVFWDIENC…ALLHHAHELI (138 aa). Disordered stretches follow at residues 576-595 and 638-717; these read VNET…PKKV and QMQS…DVVF. A compositionally biased stretch (polar residues) spans 638-647; sequence QMQSKSNKTS. Over residues 648–658 the composition is skewed to basic and acidic residues; the sequence is QQEKDKKRNGD. The span at 659–690 shows a compositional bias: polar residues; it reads KQGTLSQSSPLCTNQMLQTARNVGTDNTASKS. Residues 692–715 show a composition bias toward basic and acidic residues; it reads QKRDDTTRKSNADSQKEQKNKEDV. Residues 779–858 form the RRM domain; the sequence is ADIQIGNLDY…KRIQVSLATG (80 aa). HTH OST-type domains follow at residues 863 to 937, 991 to 1067, 1087 to 1161, 1163 to 1238, 1247 to 1321, 1323 to 1398, 1399 to 1472, and 1474 to 1548; these read SLSL…SPMG, SLKT…HNKP, QLIQ…LTHR, QVKR…IPKR, RTKQ…LTEM, RIKA…INRK, SLRS…SVQL, and SLYV…LKND. A compositionally biased stretch (polar residues) spans 1637–1648; it reads EPSTQNICPQES. Residues 1637-1662 form a disordered region; it reads EPSTQNICPQESKSTKELPESPVKRQ. Positions 1649–1659 are enriched in basic and acidic residues; it reads KSTKELPESPV.

It is found in the peroxisome. Its function is as follows. Essential regulator of oogenesis required for female meiotic progression to repress transposable elements and preventing their mobilization, which is essential for the germline integrity. This Xenopus tropicalis (Western clawed frog) protein is Meiosis regulator and mRNA stability factor 1.